A 195-amino-acid polypeptide reads, in one-letter code: ATP-dependent Clp protease proteolytic subunit (195 aa).

Catalysis depends on S97, which acts as the Nucleophile. Residue H122 is part of the active site.

The protein belongs to the peptidase S14 family. As to quaternary structure, fourteen ClpP subunits assemble into 2 heptameric rings which stack back to back to give a disk-like structure with a central cavity, resembling the structure of eukaryotic proteasomes.

The protein resides in the cytoplasm. It catalyses the reaction Hydrolysis of proteins to small peptides in the presence of ATP and magnesium. alpha-casein is the usual test substrate. In the absence of ATP, only oligopeptides shorter than five residues are hydrolyzed (such as succinyl-Leu-Tyr-|-NHMec, and Leu-Tyr-Leu-|-Tyr-Trp, in which cleavage of the -Tyr-|-Leu- and -Tyr-|-Trp bonds also occurs).. Functionally, cleaves peptides in various proteins in a process that requires ATP hydrolysis. Has a chymotrypsin-like activity. Plays a major role in the degradation of misfolded proteins. This is ATP-dependent Clp protease proteolytic subunit from Campylobacter hominis (strain ATCC BAA-381 / DSM 21671 / CCUG 45161 / LMG 19568 / NCTC 13146 / CH001A).